The following is a 1192-amino-acid chain: DNA topoisomerase 2 (1192 aa).

ATP-binding positions include Asn64, Asn95, and Gly142–Lys149. Mg(2+) is bound by residues Glu438, Asp539, and Asp541. Positions Ile707–Ile1174 constitute a Topo IIA-type catalytic domain. Catalysis depends on Tyr800, which acts as the O-(5'-phospho-DNA)-tyrosine intermediate.

Belongs to the type II topoisomerase family. Mg(2+) serves as cofactor. The cofactor is Mn(2+). It depends on Ca(2+) as a cofactor.

The protein resides in the host cytoplasm. The catalysed reaction is ATP-dependent breakage, passage and rejoining of double-stranded DNA.. Functionally, type II topoisomerase. Processively relaxes supercoiled DNA. Displays DNA-supercoiling activity only when associated with the viral histone-like protein. The chain is DNA topoisomerase 2 from African swine fever virus (isolate Tick/South Africa/Pretoriuskop Pr4/1996) (ASFV).